Here is a 126-residue protein sequence, read N- to C-terminus: Holo-[acyl-carrier-protein] synthase (126 aa).

Asp9 and Glu58 together coordinate Mg(2+).

This sequence belongs to the P-Pant transferase superfamily. AcpS family. As to quaternary structure, homodimer. It depends on Mg(2+) as a cofactor.

It is found in the cytoplasm. It catalyses the reaction apo-[ACP] + CoA = holo-[ACP] + adenosine 3',5'-bisphosphate + H(+). Functionally, transfers the 4'-phosphopantetheine moiety from coenzyme A to the 'Ser-36' of acyl-carrier-protein. The chain is Holo-[acyl-carrier-protein] synthase from Escherichia coli O157:H7.